The primary structure comprises 871 residues: Scavenger receptor class F member 2 (871 aa).

Positions 1-20 are disordered; it reads MEGAGPRGAGPARRRGAGGP. An N-terminal signal peptide occupies residues 1-43; sequence MEGAGPRGAGPARRRGAGGPPSPLLPSLLLLLLLWMLPDTVAP. Residues 44 to 441 are Extracellular-facing; it reads QELNPRGRNV…ACHLETNQRK (398 aa). EGF-like domains follow at residues 71 to 110, 122 to 153, 148 to 182, 183 to 212, 213 to 241, and 236 to 270; these read QGDECGIAVCEGNSTCSENEVCVRPGECRCRHGYFGANCD, CKELCSCHPHGQCEDVTGQCTCHARRWGARCE, WGARCEHACQCQHGTCHPRSGACRCEPGWWGAQCA, SACYCSATSRCDPQTGACLCHAGWWGRSCN, NQCACNSSPCEQQSGRCQCRERTFGARCD, and FGARCDRYCQCFRGRCHPVDGTCACEPGYRGKYCR. 18 disulfides stabilise this stretch: C75–C86, C80–C98, C100–C109, C126–C134, C128–C141, C143–C152, C156–C163, C158–C170, C172–C181, C185–C193, C187–C200, C202–C211, C215–C222, C217–C229, C231–C240, C244–C251, C246–C258, and C260–C269. N83 carries an N-linked (GlcNAc...) asparagine glycan. 2 N-linked (GlcNAc...) asparagine glycosylation sites follow: N310 and N365. The 32-residue stretch at 372–403 folds into the EGF-like 7 domain; the sequence is CAFVCADCGSGHCDFQSGRCLCSPGVHGPHCN. 3 disulfides stabilise this stretch: C376/C384, C379/C391, and C393/C402. An N-linked (GlcNAc...) asparagine glycan is attached at N403. A helical membrane pass occupies residues 442–462; that stretch reads GVMGAGALLVLLVCLLLSLLG. The Cytoplasmic segment spans residues 463-871; sequence CCCACRGKDP…ELGRAGAPTL (409 aa). Position 551 is a phosphoserine (S551). The segment covering 570–579 has biased composition (basic and acidic residues); that stretch reads EAPAESRDPE. The disordered stretch occupies residues 570 to 871; it reads EAPAESRDPE…ELGRAGAPTL (302 aa). Residue S613 is modified to Phosphoserine. Residue Y628 is modified to Phosphotyrosine. Residues 632-643 show a composition bias toward basic and acidic residues; it reads ARREARPARARG. 5 positions are modified to phosphoserine: S651, S653, S710, S718, and S742. Over residues 705–725 the composition is skewed to basic and acidic residues; the sequence is TPSDKSAHTVEHGSPRTRDPT. Positions 821–831 are enriched in low complexity; sequence PPATETPGPEK. Residues 844 to 856 show a composition bias toward basic residues; it reads KKTPIQKPPRKKS. A compositionally biased stretch (low complexity) spans 861-871; the sequence is GELGRAGAPTL.

In terms of assembly, homophilic and heterophilic interaction via its extracellular domain. Interacts with SCARF1. The heterophilic interaction with SCARF1, which is stronger than the homophilic interaction with itself, is suppressed by the presence of SCARF1 ligand such as Ac-LDL. Predominantly expressed in endothelial cells. Expressed in heart, placenta, lung, kidney, spleen, small intestine and ovary.

The protein resides in the membrane. In terms of biological role, probable adhesion protein, which mediates homophilic and heterophilic interactions. In contrast to SCARF1, it poorly mediates the binding and degradation of acetylated low density lipoprotein (Ac-LDL). The sequence is that of Scavenger receptor class F member 2 (SCARF2) from Homo sapiens (Human).